Here is a 750-residue protein sequence, read N- to C-terminus: Photosystem I P700 chlorophyll a apoprotein A1 (750 aa).

A run of 8 helical transmembrane segments spans residues 70-93 (VFSA…FHGA), 156-179 (LYCT…FHYH), 195-219 (LNHH…HVSL), 291-309 (IAHH…GHMY), 346-369 (WHAQ…HHMY), 385-411 (LSLF…IFMV), 433-455 (AIIS…LYIH), and 531-549 (FLVH…LILL). 2 residues coordinate [4Fe-4S] cluster: Cys-573 and Cys-582. A run of 2 helical transmembrane segments spans residues 589 to 610 (HVFL…HFSW) and 664 to 686 (LSAY…MFLF). Chlorophyll a' is bound at residue His-675. Chlorophyll a-binding residues include Met-683 and Tyr-691. Position 692 (Trp-692) interacts with phylloquinone. A helical membrane pass occupies residues 724 to 744 (AVGVTHYLLGGIATTWAFFLA).

The protein belongs to the PsaA/PsaB family. As to quaternary structure, the PsaA/B heterodimer binds the P700 chlorophyll special pair and subsequent electron acceptors. PSI consists of a core antenna complex that captures photons, and an electron transfer chain that converts photonic excitation into a charge separation. The eukaryotic PSI reaction center is composed of at least 11 subunits. P700 is a chlorophyll a/chlorophyll a' dimer, A0 is one or more chlorophyll a, A1 is one or both phylloquinones and FX is a shared 4Fe-4S iron-sulfur center. serves as cofactor.

The protein localises to the plastid. It localises to the chloroplast thylakoid membrane. The catalysed reaction is reduced [plastocyanin] + hnu + oxidized [2Fe-2S]-[ferredoxin] = oxidized [plastocyanin] + reduced [2Fe-2S]-[ferredoxin]. Functionally, psaA and PsaB bind P700, the primary electron donor of photosystem I (PSI), as well as the electron acceptors A0, A1 and FX. PSI is a plastocyanin-ferredoxin oxidoreductase, converting photonic excitation into a charge separation, which transfers an electron from the donor P700 chlorophyll pair to the spectroscopically characterized acceptors A0, A1, FX, FA and FB in turn. Oxidized P700 is reduced on the lumenal side of the thylakoid membrane by plastocyanin. The chain is Photosystem I P700 chlorophyll a apoprotein A1 from Aethionema grandiflorum (Persian stone-cress).